Consider the following 154-residue polypeptide: Superoxide dismutase [Cu-Zn] (154 aa).

Cu cation is bound by residues H47, H49, and H64. The cysteines at positions 58 and 147 are disulfide-linked. The Zn(2+) site is built by H64, H72, H81, and D84. H121 provides a ligand contact to Cu cation. R144 contacts substrate.

The protein belongs to the Cu-Zn superoxide dismutase family. In terms of assembly, homodimer. The cofactor is Cu cation. Requires Zn(2+) as cofactor.

The protein localises to the cytoplasm. It catalyses the reaction 2 superoxide + 2 H(+) = H2O2 + O2. Functionally, destroys radicals which are normally produced within the cells and which are toxic to biological systems. The sequence is that of Superoxide dismutase [Cu-Zn] (SOD1) from Eremothecium gossypii (strain ATCC 10895 / CBS 109.51 / FGSC 9923 / NRRL Y-1056) (Yeast).